A 191-amino-acid chain; its full sequence is Peptidyl-tRNA hydrolase (191 aa).

Tyr17 provides a ligand contact to tRNA. His22 acts as the Proton acceptor in catalysis. The tRNA site is built by Tyr68, Asn70, and Asn116.

Belongs to the PTH family. Monomer.

The protein resides in the cytoplasm. It carries out the reaction an N-acyl-L-alpha-aminoacyl-tRNA + H2O = an N-acyl-L-amino acid + a tRNA + H(+). Hydrolyzes ribosome-free peptidyl-tRNAs (with 1 or more amino acids incorporated), which drop off the ribosome during protein synthesis, or as a result of ribosome stalling. Its function is as follows. Catalyzes the release of premature peptidyl moieties from peptidyl-tRNA molecules trapped in stalled 50S ribosomal subunits, and thus maintains levels of free tRNAs and 50S ribosomes. This Mycobacterium tuberculosis (strain ATCC 25177 / H37Ra) protein is Peptidyl-tRNA hydrolase.